The sequence spans 83 residues: Sec-independent protein translocase protein TatA (83 aa).

Residues 1-21 (MGSLSPWHWAILAVVVIVLFG) traverse the membrane as a helical segment. Residues 48–83 (NENKAEASIETPTPVQSQRVDPSAASGQDSTEARPA) form a disordered region. Over residues 57–77 (ETPTPVQSQRVDPSAASGQDS) the composition is skewed to polar residues.

This sequence belongs to the TatA/E family. The Tat system comprises two distinct complexes: a TatABC complex, containing multiple copies of TatA, TatB and TatC subunits, and a separate TatA complex, containing only TatA subunits. Substrates initially bind to the TatABC complex, which probably triggers association of the separate TatA complex to form the active translocon.

Its subcellular location is the cell membrane. Part of the twin-arginine translocation (Tat) system that transports large folded proteins containing a characteristic twin-arginine motif in their signal peptide across membranes. TatA could form the protein-conducting channel of the Tat system. The sequence is that of Sec-independent protein translocase protein TatA from Mycobacterium bovis (strain BCG / Pasteur 1173P2).